The following is a 479-amino-acid chain: tRNA modification GTPase MnmE (479 aa).

The (6S)-5-formyl-5,6,7,8-tetrahydrofolate site is built by arginine 25, glutamate 82, and lysine 134. Residues 230-401 form the TrmE-type G domain; the sequence is GLRVVIAGQP…LRAALLARAG (172 aa). K(+) is bound at residue asparagine 240. GTP-binding positions include 240–245, 259–265, 284–287, 352–355, and 382–384; these read NAGKSS, TPIPGTT, DTAG, NKAD, and SAR. Serine 244 contributes to the Mg(2+) binding site. Positions 259, 261, and 264 each coordinate K(+). Threonine 265 is a Mg(2+) binding site. Lysine 479 is a (6S)-5-formyl-5,6,7,8-tetrahydrofolate binding site.

Belongs to the TRAFAC class TrmE-Era-EngA-EngB-Septin-like GTPase superfamily. TrmE GTPase family. In terms of assembly, homodimer. Heterotetramer of two MnmE and two MnmG subunits. K(+) serves as cofactor.

The protein resides in the cytoplasm. Its function is as follows. Exhibits a very high intrinsic GTPase hydrolysis rate. Involved in the addition of a carboxymethylaminomethyl (cmnm) group at the wobble position (U34) of certain tRNAs, forming tRNA-cmnm(5)s(2)U34. The sequence is that of tRNA modification GTPase MnmE from Leptothrix cholodnii (strain ATCC 51168 / LMG 8142 / SP-6) (Leptothrix discophora (strain SP-6)).